A 702-amino-acid polypeptide reads, in one-letter code: Ribosomal RNA large subunit methyltransferase K/L (702 aa).

One can recognise a THUMP domain in the interval 43–154 (LIYQSLMWSR…KETASIALDL (112 aa)).

The protein belongs to the methyltransferase superfamily. RlmKL family.

Its subcellular location is the cytoplasm. The enzyme catalyses guanosine(2445) in 23S rRNA + S-adenosyl-L-methionine = N(2)-methylguanosine(2445) in 23S rRNA + S-adenosyl-L-homocysteine + H(+). It catalyses the reaction guanosine(2069) in 23S rRNA + S-adenosyl-L-methionine = N(2)-methylguanosine(2069) in 23S rRNA + S-adenosyl-L-homocysteine + H(+). In terms of biological role, specifically methylates the guanine in position 2445 (m2G2445) and the guanine in position 2069 (m7G2069) of 23S rRNA. This Salmonella choleraesuis (strain SC-B67) protein is Ribosomal RNA large subunit methyltransferase K/L.